We begin with the raw amino-acid sequence, 446 residues long: tRNA modification GTPase MnmE (446 aa).

(6S)-5-formyl-5,6,7,8-tetrahydrofolate is bound by residues arginine 22, glutamate 80, and arginine 119. Residues 215–370 (GFKVAIIGKP…LILALENIMN (156 aa)) enclose the TrmE-type G domain. Asparagine 225 contributes to the K(+) binding site. GTP contacts are provided by residues 225-230 (NVGKSS), 244-250 (SDIAGTT), and 269-272 (DTAG). Serine 229 provides a ligand contact to Mg(2+). K(+)-binding residues include serine 244, isoleucine 246, and threonine 249. Residue threonine 250 coordinates Mg(2+). Lysine 446 lines the (6S)-5-formyl-5,6,7,8-tetrahydrofolate pocket.

This sequence belongs to the TRAFAC class TrmE-Era-EngA-EngB-Septin-like GTPase superfamily. TrmE GTPase family. As to quaternary structure, homodimer. Heterotetramer of two MnmE and two MnmG subunits. It depends on K(+) as a cofactor.

It localises to the cytoplasm. In terms of biological role, exhibits a very high intrinsic GTPase hydrolysis rate. Involved in the addition of a carboxymethylaminomethyl (cmnm) group at the wobble position (U34) of certain tRNAs, forming tRNA-cmnm(5)s(2)U34. The protein is tRNA modification GTPase MnmE of Sulfurimonas denitrificans (strain ATCC 33889 / DSM 1251) (Thiomicrospira denitrificans (strain ATCC 33889 / DSM 1251)).